A 915-amino-acid chain; its full sequence is Clathrin coat assembly protein AP180 (915 aa).

The ENTH domain occupies 14 to 145; that stretch reads QYSVTGSAVA…FSYRQMAFDF (132 aa). 3 disordered regions span residues 285-326, 391-425, and 497-522; these read LEGK…DTSP, SVPS…ATTA, and PETS…PSPA. Phosphoserine occurs at positions 296, 300, and 306. Positions 302–324 are enriched in polar residues; that stretch reads LSKSSPATTVTSPNSTPAKTIDT. T310 carries an O-linked (GlcNAc) threonine glycan. S313 is subject to Phosphoserine. T317 is subject to Phosphothreonine. Composition is skewed to low complexity over residues 410–425 and 500–511; these read TTTT…ATTA and SAPVVTPTASTA. Over residues 512-522 the composition is skewed to pro residues; it reads PPVPATAPSPA. Residues S594, S600, P627, S640, and S646 each carry the phosphoserine modification. The segment covering 720–735 has biased composition (low complexity); it reads TTPSTSSSSSFDPSGD. The tract at residues 720-765 is disordered; sequence TTPSTSSSSSFDPSGDLLMPTMAPSGQPAPVSMVPPSPAMSASKGL. Phosphoserine is present on S775. The disordered stretch occupies residues 817–855; it reads SAGVPPQGTVPPTSSVPPGAGAPSVGQPGAGYGMPPAGT. Residue R873 is modified to Asymmetric dimethylarginine; alternate. R873 carries the omega-N-methylarginine; alternate modification. Residues 875–915 form a disordered region; sequence PFGAAAVPGTQLSPSPTPATQSPKKPPAKDPLADLNIKDFL. Positions 884–896 are enriched in polar residues; that stretch reads TQLSPSPTPATQS. Over residues 901-915 the composition is skewed to basic and acidic residues; the sequence is PAKDPLADLNIKDFL.

It belongs to the PICALM/SNAP91 family. In terms of assembly, binds AP2A2. Interacts with AP2B1; clathrin competes with SNAP91. In terms of processing, thr-310 can be modified by the addition of N-acetylglucosamine which can be further phosphorylated. The form with phosphorylated O-linked N-acetylglucosamine is predominant in brain synaptosomes. There is no evidence for direct Thr-310 phosphorylation.

Its subcellular location is the cell membrane. The protein localises to the membrane. The protein resides in the coated pit. Adaptins are components of the adapter complexes which link clathrin to receptors in coated vesicles. Clathrin-associated protein complexes are believed to interact with the cytoplasmic tails of membrane proteins, leading to their selection and concentration. Binding of AP180 to clathrin triskelia induces their assembly into 60-70 nm coats. The protein is Clathrin coat assembly protein AP180 (Snap91) of Rattus norvegicus (Rat).